Reading from the N-terminus, the 318-residue chain is Tyrosine recombinase XerC (318 aa).

Positions 17-108 (PEVMAERRRW…GLRSFLRYLE (92 aa)) constitute a Core-binding (CB) domain. One can recognise a Tyr recombinase domain in the interval 129-312 (SLPKALTDRE…DSARLLEIYD (184 aa)). Active-site residues include arginine 172, lysine 196, histidine 264, arginine 267, and histidine 290. Tyrosine 299 functions as the O-(3'-phospho-DNA)-tyrosine intermediate in the catalytic mechanism.

This sequence belongs to the 'phage' integrase family. XerC subfamily. Forms a cyclic heterotetrameric complex composed of two molecules of XerC and two molecules of XerD.

It localises to the cytoplasm. Site-specific tyrosine recombinase, which acts by catalyzing the cutting and rejoining of the recombining DNA molecules. The XerC-XerD complex is essential to convert dimers of the bacterial chromosome into monomers to permit their segregation at cell division. It also contributes to the segregational stability of plasmids. This is Tyrosine recombinase XerC from Rhizobium meliloti (strain 1021) (Ensifer meliloti).